The following is an 827-amino-acid chain: MTFCYPCRAFALLTRGFTSFMSGWPRIYYKLLNLPLSILVKSKSIPADPAPELGLDTSRPIMYVLPYNSKADLLTLRAQCLAHDLPDPLEPLEIDGTLLPRYVFIHGGPRVFTYYTPKEESIKLFHDYLDLHRSNPNLDVQMVPVSVMFGRAPGREKGEVNPPLRMLNGVQKFFAVLWLGRDSFVRFSPSVSLRRMADEHGTDKTIAQKLARVARMHFARQRLAAVGPRLPARQDLFNKLLASRAIAKAVEDEARSKKISHEKAQQNAIALMEEIAANFSYEMIRLTDRILGFTWNRFYQGINVHNAERVRQLAHDGHELVYVPCHRSHMDYLLLSYVLYHQGLVPPHIAAGINLNFWPAGPIFRRLGAFFIRRTFKGNKLYSTVFREYLGELFSRGYSVEYFVEGGRSRTGRLLDPKTGTLSMTIQAMLRGGTRPITLIPIYIGYEHVMEVGTYAKELRGATKEKESLPQMLRGLSKLRNLGQGYVNFGEPMPLMTYLNQHVPDWRESIDPIEAVRPAWLTPTVNNIAADLMVRINNAGAANAMNLCCTALLASRQRSLTREQLTEQLNCYLDLMRNVPYSTDSTVPSASASELIDHALQMNKFEVEKDTIGDIIILPREQAVLMTYYRNNIAHMLVLPSLMAAIVTQHRHISRDVLMEHVNVLYPMLKAELFLRWDRDELPDVIDALANEMQRQGLITLQDDELHINPAHSRTLQLLAAGARETLQRYAITFWLLSANPSINRGTLEKESRTVAQRLSVLHGINAPEFFDKAVFSSLVLTLRDEGYISDSGDAEPAETMKVYQLLAELITSDVRLTIESATQGEG.

An HXXXXD motif motif is present at residues 325 to 330; the sequence is CHRSHM.

This sequence belongs to the GPAT/DAPAT family.

It is found in the cell inner membrane. It carries out the reaction sn-glycerol 3-phosphate + an acyl-CoA = a 1-acyl-sn-glycero-3-phosphate + CoA. It participates in phospholipid metabolism; CDP-diacylglycerol biosynthesis; CDP-diacylglycerol from sn-glycerol 3-phosphate: step 1/3. The polypeptide is Glycerol-3-phosphate acyltransferase (Shigella flexneri serotype 5b (strain 8401)).